A 133-amino-acid chain; its full sequence is MGMTSDSIANLLTRIRNALMAEHLYIDIEHSKMLEAIVRILKQHGFVAHFLVKEENRKRLMRVFLRYGEDRRPVIHALKRVSKPSRRVYVSAAKIPYVFGNMGIAVLSTPQGVLEGSVARAKNVGGELLCLVW.

The protein belongs to the universal ribosomal protein uS8 family. Part of the 30S ribosomal subunit. Contacts proteins S5 and S12.

One of the primary rRNA binding proteins, it binds directly to 16S rRNA central domain where it helps coordinate assembly of the platform of the 30S subunit. This chain is Small ribosomal subunit protein uS8, found in Chlamydia trachomatis serovar L2b (strain UCH-1/proctitis).